The following is a 324-amino-acid chain: tRNA dimethylallyltransferase (324 aa).

17–24 contributes to the ATP binding site; it reads GPTASGKT. Position 19-24 (19-24) interacts with substrate; the sequence is TASGKT. Interaction with substrate tRNA stretches follow at residues 42–45, 166–170, 251–256, and 284–291; these read DSAL, QRIQR, RCVGYR, and KRQITWLR.

Belongs to the IPP transferase family. In terms of assembly, monomer. It depends on Mg(2+) as a cofactor.

The enzyme catalyses adenosine(37) in tRNA + dimethylallyl diphosphate = N(6)-dimethylallyladenosine(37) in tRNA + diphosphate. Catalyzes the transfer of a dimethylallyl group onto the adenine at position 37 in tRNAs that read codons beginning with uridine, leading to the formation of N6-(dimethylallyl)adenosine (i(6)A). The sequence is that of tRNA dimethylallyltransferase from Burkholderia orbicola (strain AU 1054).